The sequence spans 62 residues: Large ribosomal subunit protein uL29 (62 aa).

Belongs to the universal ribosomal protein uL29 family.

This Geobacter metallireducens (strain ATCC 53774 / DSM 7210 / GS-15) protein is Large ribosomal subunit protein uL29.